Reading from the N-terminus, the 319-residue chain is Beta-ketoacyl-[acyl-carrier-protein] synthase III (319 aa).

Catalysis depends on residues cysteine 113 and histidine 246. Residues 247 to 251 are ACP-binding; it reads QANLR. Residue asparagine 276 is part of the active site.

The protein belongs to the thiolase-like superfamily. FabH family. Homodimer.

Its subcellular location is the cytoplasm. The catalysed reaction is malonyl-[ACP] + acetyl-CoA + H(+) = 3-oxobutanoyl-[ACP] + CO2 + CoA. Its pathway is lipid metabolism; fatty acid biosynthesis. Functionally, catalyzes the condensation reaction of fatty acid synthesis by the addition to an acyl acceptor of two carbons from malonyl-ACP. Catalyzes the first condensation reaction which initiates fatty acid synthesis and may therefore play a role in governing the total rate of fatty acid production. Possesses both acetoacetyl-ACP synthase and acetyl transacylase activities. Its substrate specificity determines the biosynthesis of branched-chain and/or straight-chain of fatty acids. This Chromobacterium violaceum (strain ATCC 12472 / DSM 30191 / JCM 1249 / CCUG 213 / NBRC 12614 / NCIMB 9131 / NCTC 9757 / MK) protein is Beta-ketoacyl-[acyl-carrier-protein] synthase III.